The following is a 411-amino-acid chain: Serpin A3-2 (411 aa).

The N-terminal stretch at 1–24 (MRAERTSFLLALGLLVAGIRSVHC) is a signal peptide. Asn100, Asn180, Asn230, and Asn264 each carry an N-linked (GlcNAc...) asparagine glycan.

Belongs to the serpin family. Homodimer.

It is found in the cytoplasmic vesicle. The protein localises to the secretory vesicle. It localises to the chromaffin granule. Its subcellular location is the secreted. Functionally, serine protease inhibitor. The polypeptide is Serpin A3-2 (Bos taurus (Bovine)).